Here is a 277-residue protein sequence, read N- to C-terminus: MEMO1 family protein CTN_0605 (277 aa).

This sequence belongs to the MEMO1 family.

This is MEMO1 family protein CTN_0605 from Thermotoga neapolitana (strain ATCC 49049 / DSM 4359 / NBRC 107923 / NS-E).